A 118-amino-acid polypeptide reads, in one-letter code: Large ribosomal subunit protein bL19 (118 aa).

It belongs to the bacterial ribosomal protein bL19 family.

Functionally, this protein is located at the 30S-50S ribosomal subunit interface and may play a role in the structure and function of the aminoacyl-tRNA binding site. The chain is Large ribosomal subunit protein bL19 from Lactiplantibacillus plantarum (strain ATCC BAA-793 / NCIMB 8826 / WCFS1) (Lactobacillus plantarum).